The sequence spans 204 residues: Putative AgrB-like protein (204 aa).

Transmembrane regions (helical) follow at residues 51-73, 87-107, 111-131, 151-168, and 173-190; these read VYGIALVTGLLLQTVTVHLSYLW, LNCTLISLTMFVLAPFIFQNI, NWIVLGTFAFILLNMFLFAPA, AMIGTLILTGIALLIPFA, and LIMVGSLFQVISINPLTY.

It belongs to the AgrB family.

Its subcellular location is the cell membrane. Its function is as follows. May be involved in the proteolytic processing of a quorum sensing system signal molecule precursor. This is Putative AgrB-like protein from Listeria innocua serovar 6a (strain ATCC BAA-680 / CLIP 11262).